The primary structure comprises 170 residues: Protein BofC (170 aa).

The N-terminal stretch at 1 to 30 (MKRFSTAYLLLGILCSAAVFLIGAPSRALG) is a signal peptide.

As to quaternary structure, monomer.

It is found in the forespore intermembrane space. Functionally, inhibits the SpoIVB zymogen from undergoing autocatalytic activation by an unknown mechanism, and in this way plays a role in the sigma-K checkpoint of sporulation. In Bacillus subtilis (strain 168), this protein is Protein BofC (bofC).